Here is a 372-residue protein sequence, read N- to C-terminus: Flap endonuclease 1 (372 aa).

The interval 1–105 is N-domain; the sequence is MGVKGLNQLI…GELEKRLLRR (105 aa). Asp-34 is a binding site for Mg(2+). DNA-binding residues include Arg-47 and Arg-71. Mg(2+) contacts are provided by Asp-87, Glu-159, Glu-161, Asp-180, and Asp-182. The tract at residues 123–254 is I-domain; the sequence is EVLKFEKRLV…ATAFKLIKEH (132 aa). Residue Glu-159 participates in DNA binding. DNA contacts are provided by Gly-232 and Asp-234. Asp-234 is a binding site for Mg(2+). An interaction with PCNA region spans residues 339–347; sequence VQGRLDGFF. Positions 353–366 are enriched in basic and acidic residues; that stretch reads DDKKRKADPKESKA. Positions 353–372 are disordered; it reads DDKKRKADPKESKASKKKKK.

This sequence belongs to the XPG/RAD2 endonuclease family. FEN1 subfamily. As to quaternary structure, interacts with PCNA. Three molecules of RAD27 bind to one PCNA trimer with each molecule binding to one PCNA monomer. PCNA stimulates the nuclease activity without altering cleavage specificity. Mg(2+) serves as cofactor. Phosphorylated. Phosphorylation upon DNA damage induces relocalization to the nuclear plasma.

The protein localises to the nucleus. The protein resides in the nucleolus. It is found in the nucleoplasm. Its subcellular location is the mitochondrion. In terms of biological role, structure-specific nuclease with 5'-flap endonuclease and 5'-3' exonuclease activities involved in DNA replication and repair. During DNA replication, cleaves the 5'-overhanging flap structure that is generated by displacement synthesis when DNA polymerase encounters the 5'-end of a downstream Okazaki fragment. It enters the flap from the 5'-end and then tracks to cleave the flap base, leaving a nick for ligation. Also involved in the long patch base excision repair (LP-BER) pathway, by cleaving within the apurinic/apyrimidinic (AP) site-terminated flap. Acts as a genome stabilization factor that prevents flaps from equilibrating into structures that lead to duplications and deletions. Also possesses 5'-3' exonuclease activity on nicked or gapped double-stranded DNA, and exhibits RNase H activity. Also involved in replication and repair of rDNA and in repairing mitochondrial DNA. The chain is Flap endonuclease 1 from Candida albicans (strain WO-1) (Yeast).